Here is a 426-residue protein sequence, read N- to C-terminus: Gamma-glutamyl phosphate reductase (426 aa).

This sequence belongs to the gamma-glutamyl phosphate reductase family.

The protein localises to the cytoplasm. The enzyme catalyses L-glutamate 5-semialdehyde + phosphate + NADP(+) = L-glutamyl 5-phosphate + NADPH + H(+). The protein operates within amino-acid biosynthesis; L-proline biosynthesis; L-glutamate 5-semialdehyde from L-glutamate: step 2/2. Its function is as follows. Catalyzes the NADPH-dependent reduction of L-glutamate 5-phosphate into L-glutamate 5-semialdehyde and phosphate. The product spontaneously undergoes cyclization to form 1-pyrroline-5-carboxylate. This Cupriavidus necator (strain ATCC 17699 / DSM 428 / KCTC 22496 / NCIMB 10442 / H16 / Stanier 337) (Ralstonia eutropha) protein is Gamma-glutamyl phosphate reductase.